Here is a 144-residue protein sequence, read N- to C-terminus: Maximins 7/H6 (144 aa).

The first 18 residues, 1–18, serve as a signal peptide directing secretion; that stretch reads MNFKYIVAVSFLIASAYA. Positions 19–43 are excised as a propeptide; it reads RSEENDEQSLSQRDILEEESLREIR. At asparagine 70 the chain carries Asparagine amide. Positions 74–123 are excised as a propeptide; the sequence is TAEDHEVMKRLEAVMRDLDSLDYPEEAAERETRGFNQEEIANLFTKKEKR. Leucine 143 bears the Leucine amide mark.

This sequence belongs to the bombinin family. Expressed by the skin glands.

The protein resides in the secreted. In terms of biological role, maximin-7 shows antimicrobial activity against bacteria and against the fungus C.albicans. It has little hemolytic activity. Functionally, maximin-H6 shows antimicrobial activity against bacteria and against the fungus C.albicans. Shows strong hemolytic activity. In Bombina maxima (Giant fire-bellied toad), this protein is Maximins 7/H6.